A 259-amino-acid chain; its full sequence is 14-3-3-like protein GF14 omega (259 aa).

S67, S109, and S190 each carry phosphoserine. Phosphothreonine is present on T211.

Belongs to the 14-3-3 family. In terms of assembly, interacts with CINV1.

It is found in the nucleus. The protein resides in the cytoplasm. Functionally, is associated with a DNA binding complex that binds to the G box, a well-characterized cis-acting DNA regulatory element found in plant genes. This chain is 14-3-3-like protein GF14 omega (GRF2), found in Arabidopsis thaliana (Mouse-ear cress).